The following is an 83-amino-acid chain: Small integral membrane protein 10 (83 aa).

A helical transmembrane segment spans residues F64–Y82.

It is found in the membrane. In Homo sapiens (Human), this protein is Small integral membrane protein 10 (SMIM10).